Consider the following 271-residue polypeptide: 3-methyl-2-oxobutanoate hydroxymethyltransferase (271 aa).

Mg(2+)-binding residues include aspartate 51 and aspartate 90. 3-methyl-2-oxobutanoate is bound by residues 51–52 (DS), aspartate 90, and lysine 118. Glutamate 120 is a binding site for Mg(2+). Residue glutamate 186 is the Proton acceptor of the active site.

Belongs to the PanB family. Homodecamer; pentamer of dimers. Mg(2+) serves as cofactor.

It is found in the cytoplasm. The catalysed reaction is 3-methyl-2-oxobutanoate + (6R)-5,10-methylene-5,6,7,8-tetrahydrofolate + H2O = 2-dehydropantoate + (6S)-5,6,7,8-tetrahydrofolate. Its pathway is cofactor biosynthesis; (R)-pantothenate biosynthesis; (R)-pantoate from 3-methyl-2-oxobutanoate: step 1/2. In terms of biological role, catalyzes the reversible reaction in which hydroxymethyl group from 5,10-methylenetetrahydrofolate is transferred onto alpha-ketoisovalerate to form ketopantoate. This chain is 3-methyl-2-oxobutanoate hydroxymethyltransferase, found in Xanthomonas euvesicatoria pv. vesicatoria (strain 85-10) (Xanthomonas campestris pv. vesicatoria).